A 418-amino-acid chain; its full sequence is Imidazolonepropionase (418 aa).

Residues His-79 and His-81 each coordinate Fe(3+). 2 residues coordinate Zn(2+): His-79 and His-81. 4-imidazolone-5-propanoate-binding residues include Arg-88, Tyr-151, and His-184. Residue Tyr-151 coordinates N-formimidoyl-L-glutamate. Position 249 (His-249) interacts with Fe(3+). Residue His-249 coordinates Zn(2+). Gln-252 lines the 4-imidazolone-5-propanoate pocket. Fe(3+) is bound at residue Asp-324. Position 324 (Asp-324) interacts with Zn(2+). The N-formimidoyl-L-glutamate site is built by Asn-326 and Gly-328. A 4-imidazolone-5-propanoate-binding site is contributed by Thr-329.

This sequence belongs to the metallo-dependent hydrolases superfamily. HutI family. It depends on Zn(2+) as a cofactor. Fe(3+) serves as cofactor.

It localises to the cytoplasm. It carries out the reaction 4-imidazolone-5-propanoate + H2O = N-formimidoyl-L-glutamate. It functions in the pathway amino-acid degradation; L-histidine degradation into L-glutamate; N-formimidoyl-L-glutamate from L-histidine: step 3/3. Functionally, catalyzes the hydrolytic cleavage of the carbon-nitrogen bond in imidazolone-5-propanoate to yield N-formimidoyl-L-glutamate. It is the third step in the universal histidine degradation pathway. The sequence is that of Imidazolonepropionase from Colwellia psychrerythraea (strain 34H / ATCC BAA-681) (Vibrio psychroerythus).